A 215-amino-acid chain; its full sequence is Probable transaldolase (215 aa).

The Schiff-base intermediate with substrate role is filled by Lys-83.

The protein belongs to the transaldolase family. Type 3B subfamily.

Its subcellular location is the cytoplasm. The catalysed reaction is D-sedoheptulose 7-phosphate + D-glyceraldehyde 3-phosphate = D-erythrose 4-phosphate + beta-D-fructose 6-phosphate. It functions in the pathway carbohydrate degradation; pentose phosphate pathway; D-glyceraldehyde 3-phosphate and beta-D-fructose 6-phosphate from D-ribose 5-phosphate and D-xylulose 5-phosphate (non-oxidative stage): step 2/3. Functionally, transaldolase is important for the balance of metabolites in the pentose-phosphate pathway. The sequence is that of Probable transaldolase from Methanococcus maripaludis (strain DSM 14266 / JCM 13030 / NBRC 101832 / S2 / LL).